The following is a 147-amino-acid chain: uncharacterized protein (147 aa).

This is an uncharacterized protein from Aedes vexans (Inland floodwater mosquito).